The sequence spans 320 residues: Lipoyl synthase (320 aa).

Positions 67, 72, 78, 93, 97, 100, and 307 each coordinate [4Fe-4S] cluster. The region spanning 79-296 is the Radical SAM core domain; that stretch reads FNHGTATFMI…RDKAQAMGFE (218 aa).

It belongs to the radical SAM superfamily. Lipoyl synthase family. The cofactor is [4Fe-4S] cluster.

The protein localises to the cytoplasm. The enzyme catalyses [[Fe-S] cluster scaffold protein carrying a second [4Fe-4S](2+) cluster] + N(6)-octanoyl-L-lysyl-[protein] + 2 oxidized [2Fe-2S]-[ferredoxin] + 2 S-adenosyl-L-methionine + 4 H(+) = [[Fe-S] cluster scaffold protein] + N(6)-[(R)-dihydrolipoyl]-L-lysyl-[protein] + 4 Fe(3+) + 2 hydrogen sulfide + 2 5'-deoxyadenosine + 2 L-methionine + 2 reduced [2Fe-2S]-[ferredoxin]. Its pathway is protein modification; protein lipoylation via endogenous pathway; protein N(6)-(lipoyl)lysine from octanoyl-[acyl-carrier-protein]: step 2/2. Catalyzes the radical-mediated insertion of two sulfur atoms into the C-6 and C-8 positions of the octanoyl moiety bound to the lipoyl domains of lipoate-dependent enzymes, thereby converting the octanoylated domains into lipoylated derivatives. The sequence is that of Lipoyl synthase from Pasteurella multocida (strain Pm70).